Consider the following 275-residue polypeptide: Large ribosomal subunit protein uL2 (275 aa).

Disordered stretches follow at residues I24–G47 and P227–K261.

This sequence belongs to the universal ribosomal protein uL2 family. In terms of assembly, part of the 50S ribosomal subunit. Forms a bridge to the 30S subunit in the 70S ribosome.

One of the primary rRNA binding proteins. Required for association of the 30S and 50S subunits to form the 70S ribosome, for tRNA binding and peptide bond formation. It has been suggested to have peptidyltransferase activity; this is somewhat controversial. Makes several contacts with the 16S rRNA in the 70S ribosome. In Xylella fastidiosa (strain M12), this protein is Large ribosomal subunit protein uL2.